The following is a 993-amino-acid chain: Muscular LMNA-interacting protein (993 aa).

An interaction with LMNA region spans residues 1–51 (MLSEQGLLSDCGNNYFQMTSCILSGSIQTTPQVSAGGSEAKPLIFTFVPTV). The segment at 71–90 (PEESSDKSPETVNRSKSNDY) is disordered. Residues 80–90 (ETVNRSKSNDY) are compositionally biased toward polar residues. A Phosphoserine modification is found at S146. Disordered stretches follow at residues 152-171 (AASRKVEQGPPGGIGTAAVR), 186-225 (VRPKTQGTDLKTSSHPEMLHGMAPQQKHGQLTSSPTTSEQ), 231-250 (PAFSFVSPTNPNTPPDPVNL), 300-322 (PHSTQLSGSNLPSSTAADPKPGL), 334-358 (SHVLSHGESPRTSSSPPSSSASLKS), 443-481 (SPASSTLTLDQKEKQTPPTPKKSLSSCSLRAGSPDQGEL), 500-582 (TPLS…IHTY), 677-711 (SALHPHCGSGTLPSRLGKSESTTPNHRSPVSTPSL), and 811-864 (LSMH…SQLT). A required for interaction with ISL1 region spans residues 161–837 (PPGGIGTAAV…GSDTVKTPTT (677 aa)). The span at 212-225 (KHGQLTSSPTTSEQ) shows a compositional bias: polar residues. Polar residues predominate over residues 300–315 (PHSTQLSGSNLPSSTA). Low complexity predominate over residues 343 to 358 (PRTSSSPPSSSASLKS). Residues 500 to 532 (TPLSQAPSLSPTKQASSSLASMNVERTPSPTLK) show a composition bias toward polar residues. Low complexity predominate over residues 533–563 (SNTMLSLLQTSTSSSVGLPPVPPSSSLSSLK). The span at 564-574 (SKQDGDLRGPE) shows a compositional bias: basic and acidic residues. Over residues 695-711 (SESTTPNHRSPVSTPSL) the composition is skewed to polar residues. Positions 811 to 822 (LSMHSSDSPSRS) are enriched in low complexity. At S818 the chain carries Phosphoserine. The segment covering 849-864 (ANLSSPSSTVSESQLT) has biased composition (polar residues).

In terms of assembly, directly interacts with LMNA. Interacts with ISL1 (via N-terminal domain); the interaction represses ISL1 transactivator activity. Interactions of ISL1 with MLIP1 and GCN5/KAT2A may be mutually exclusive. Predominantly expressed in the heart and skeletal muscle. Also detected in liver. In terms of tissue distribution, expressed in skeletal muscle.

It is found in the nucleus. The protein localises to the nucleus envelope. The protein resides in the PML body. It localises to the cytoplasm. Its subcellular location is the cytosol. It is found in the cell membrane. The protein localises to the sarcolemma. In terms of biological role, required for myoblast differentiation into myotubes, possibly acting as a transcriptional regulator of the myogenic program. Required for cardiac adaptation to stress through integrated regulation of the AKT/mTOR pathways and FOXO1. Regulates cardiac homeostasis and plays a role in the protection against cardiac hypertrophy. Binds chromatin. May act as a transcriptional cofactor for ISL1, repressing its transcriptional activity. May also repress MYOCD transcriptional activity. This is Muscular LMNA-interacting protein from Homo sapiens (Human).